A 211-amino-acid chain; its full sequence is MQTVNQTATKVLTETVTAIPHRRVGILGGTFNPPHLGHLIMAQQVGDQLGLDEVRFMPDAQPPHVDEKKTIAVEDRANMVQEAIVDNPLFRLETAEIERGGKSYTYETMKFLKAKHPDTQYYFIIGGDMVDYLHTWYHIDELVKLVTFVGIKRTGYPTTSQYPVIWVDAPLIDISSTQIRQKISHGHSVRYLVPEAVAAYIKEHHLYEQND.

It belongs to the NadD family.

It carries out the reaction nicotinate beta-D-ribonucleotide + ATP + H(+) = deamido-NAD(+) + diphosphate. Its pathway is cofactor biosynthesis; NAD(+) biosynthesis; deamido-NAD(+) from nicotinate D-ribonucleotide: step 1/1. Its function is as follows. Catalyzes the reversible adenylation of nicotinate mononucleotide (NaMN) to nicotinic acid adenine dinucleotide (NaAD). The sequence is that of Probable nicotinate-nucleotide adenylyltransferase from Lactiplantibacillus plantarum (strain ATCC BAA-793 / NCIMB 8826 / WCFS1) (Lactobacillus plantarum).